The chain runs to 196 residues: Late protein I196L (196 aa).

Tandem repeats lie at residues 28 to 48 and 49 to 68. One copy of the 3; approximate repeat lies at 69 to 87; that stretch reads ITTAISNNITDKDDYTHFS.

It belongs to the asfivirus I196L family.

The polypeptide is Late protein I196L (Ornithodoros (relapsing fever ticks)).